A 333-amino-acid chain; its full sequence is Cinnamoyl-CoA reductase 1 (333 aa).

NADP(+)-binding positions include 13–19 (GAGGFIA), Arg38, Lys44, 64–65 (DL), 84–86 (TAS), Tyr157, Lys161, 184–187 (PVLV), and Ser199. Cysteines 150 and 158 form a disulfide. Lys161 acts as the Proton donor in catalysis.

The protein belongs to the NAD(P)-dependent epimerase/dehydratase family. Dihydroflavonol-4-reductase subfamily. The formation of a reversible disulfide bond reduces activity by perturbing the positioning of nearby catalytic residues. As to expression, expressed in flowers, leaves and stems.

The protein localises to the cytoplasm. The catalysed reaction is (E)-coniferaldehyde + NADP(+) + CoA = (E)-feruloyl-CoA + NADPH + H(+). It carries out the reaction (E)-4-coumaraldehyde + NADP(+) + CoA = (E)-4-coumaroyl-CoA + NADPH + H(+). The enzyme catalyses (E)-sinapaldehyde + NADP(+) + CoA = (E)-sinapoyl-CoA + NADPH + H(+). It catalyses the reaction (E)-cinnamaldehyde + NADP(+) + CoA = (E)-cinnamoyl-CoA + NADPH + H(+). The protein operates within aromatic compound metabolism; phenylpropanoid biosynthesis. With respect to regulation, inhibited by sodium iodide-mediated oxidation. Involved in the latter stages of lignin biosynthesis. Catalyzes one of the last steps of monolignol biosynthesis, the conversion of cinnamoyl-CoAs into their corresponding cinnamaldehydes. Mediates the conversion of feruloyl CoA to coniferylaldehyde. Also active toward p-coumaroyl-CoA and sinapoyl-CoA. Involved in the production of floral volatile phenylpropanoids in flowers of fragrant cultivars (e.g. cv. Mitchell and cv. V26) from cinnamic acid, a common precursor with the anthocyanin biosynthesis pathway involved in flower pigmentation. In Petunia hybrida (Petunia), this protein is Cinnamoyl-CoA reductase 1.